A 137-amino-acid chain; its full sequence is Putative pre-16S rRNA nuclease (137 aa).

This sequence belongs to the YqgF nuclease family.

It is found in the cytoplasm. Could be a nuclease involved in processing of the 5'-end of pre-16S rRNA. This Bacillus cereus (strain AH187) protein is Putative pre-16S rRNA nuclease.